An 831-amino-acid chain; its full sequence is DNA ligase (831 aa).

Residues 34-38, 83-84, and glutamate 114 contribute to the NAD(+) site; these read DADYD and SL. The active-site N6-AMP-lysine intermediate is lysine 116. 4 residues coordinate NAD(+): arginine 137, glutamate 174, lysine 291, and lysine 315. 4 residues coordinate Zn(2+): cysteine 409, cysteine 412, cysteine 427, and cysteine 433. One can recognise a BRCT domain in the interval 749–831; it reads AHTAPLNGQS…LDFLEQYSAQ (83 aa).

The protein belongs to the NAD-dependent DNA ligase family. LigA subfamily. Requires Mg(2+) as cofactor. The cofactor is Mn(2+).

It carries out the reaction NAD(+) + (deoxyribonucleotide)n-3'-hydroxyl + 5'-phospho-(deoxyribonucleotide)m = (deoxyribonucleotide)n+m + AMP + beta-nicotinamide D-nucleotide.. Its function is as follows. DNA ligase that catalyzes the formation of phosphodiester linkages between 5'-phosphoryl and 3'-hydroxyl groups in double-stranded DNA using NAD as a coenzyme and as the energy source for the reaction. It is essential for DNA replication and repair of damaged DNA. In Xylella fastidiosa (strain M12), this protein is DNA ligase.